Consider the following 467-residue polypeptide: Cysteine--tRNA ligase (467 aa).

Residue C29 coordinates Zn(2+). The 'HIGH' region motif lies at 31 to 41 (PTVYNYVHIGN). Zn(2+) is bound by residues C209, H234, and E238. Positions 267 to 271 (KMSKS) match the 'KMSKS' region motif. K270 serves as a coordination point for ATP.

It belongs to the class-I aminoacyl-tRNA synthetase family. In terms of assembly, monomer. Zn(2+) serves as cofactor.

Its subcellular location is the cytoplasm. It carries out the reaction tRNA(Cys) + L-cysteine + ATP = L-cysteinyl-tRNA(Cys) + AMP + diphosphate. The sequence is that of Cysteine--tRNA ligase from Xylella fastidiosa (strain Temecula1 / ATCC 700964).